Here is a 447-residue protein sequence, read N- to C-terminus: MRVVLAGTGSAVGKTTIATGIMKALSGRGVQPFKVGPDYIDPSYHTMATGNTSRNIDSFFMTEAQIREAFTRAMKLSGSRMGIIEGVRGLYEGISPIGDTGSTASVAKALDAPVVLIINSRSLVKSAAAMVLGFRSLDREVKIEGVILNQVKNRRHYLKTRRAVEELTGTAVIGGIPRSSELEVEQRHLGLVPAVERDTIAAQIEKWGLAMEEYIDLEALQDIMSSAGKIRGERQPLWQRGNRKRVRIGVAIDEAFNFYYQENIEALEDNAASVVPFSPIHDEELPDVDAVYIGGGYPEIFAAELESNTSMRKSIQRFHADGRPIFGECGGLMYLMSSIDEREMCGVFPHPAEMTGRVQGLSYVIAEAVMDNLITEAGDKFRGHEFHYSRVLGASGGKFAFRVLRGRGIVDSLDGITSGSSLASYIHIHAASCPQFAANFTRNAWEF.

A GATase cobBQ-type domain is found at 247-435; that stretch reads RIGVAIDEAF…IHIHAASCPQ (189 aa). The active-site Nucleophile is the C329.

This sequence belongs to the CobB/CbiA family. Mg(2+) is required as a cofactor.

It catalyses the reaction cob(II)yrinate + 2 L-glutamine + 2 ATP + 2 H2O = cob(II)yrinate a,c diamide + 2 L-glutamate + 2 ADP + 2 phosphate + 2 H(+). The catalysed reaction is Ni-sirohydrochlorin + 2 L-glutamine + 2 ATP + 2 H2O = Ni-sirohydrochlorin a,c-diamide + 2 L-glutamate + 2 ADP + 2 phosphate + 2 H(+). The protein operates within cofactor biosynthesis; adenosylcobalamin biosynthesis; cob(II)yrinate a,c-diamide from sirohydrochlorin (anaerobic route): step 10/10. Its function is as follows. Catalyzes the ATP-dependent amidation of the two carboxylate groups at positions a and c of cobyrinate, using either L-glutamine or ammonia as the nitrogen source. Involved in the biosynthesis of the unique nickel-containing tetrapyrrole coenzyme F430, the prosthetic group of methyl-coenzyme M reductase (MCR), which plays a key role in methanogenesis and anaerobic methane oxidation. Catalyzes the ATP-dependent amidation of the two carboxylate groups at positions a and c of Ni-sirohydrochlorin, using L-glutamine or ammonia as the nitrogen source. The sequence is that of Cobyrinate a,c-diamide synthase from Methanothermobacter thermautotrophicus (strain ATCC 29096 / DSM 1053 / JCM 10044 / NBRC 100330 / Delta H) (Methanobacterium thermoautotrophicum).